Consider the following 288-residue polypeptide: Protein CREG2 (288 aa).

Positions methionine 1 to glycine 31 are cleaved as a signal peptide. Residues alanine 78–arginine 100 are disordered. Asparagine 164 is a glycosylation site (N-linked (GlcNAc...) asparagine).

It belongs to the CREG family. As to expression, brain specific.

The protein resides in the secreted. The protein is Protein CREG2 (Creg2) of Mus musculus (Mouse).